We begin with the raw amino-acid sequence, 110 residues long: UPF0060 membrane protein MT2717 (110 aa).

4 helical membrane-spanning segments follow: residues 6–26 (ILLFVLAAVAEIGGAWLVWQG), 32–52 (GWLWAGLGVIALGVYGFFATL), 61–81 (VLAAYGGVFVAGSLAWGMALD), and 90–110 (VIGALGCMAGVAVIMYAPRGH).

This sequence belongs to the UPF0060 family.

Its subcellular location is the cell membrane. This chain is UPF0060 membrane protein MT2717, found in Mycobacterium tuberculosis (strain CDC 1551 / Oshkosh).